The following is a 273-amino-acid chain: Nitrogenase iron protein (273 aa).

8 to 15 (GKGGIGKS) is a binding site for ATP. A [4Fe-4S] cluster-binding site is contributed by cysteine 95. Position 98 is an ADP-ribosylarginine; by dinitrogenase reductase ADP-ribosyltransferase (arginine 98). Residue cysteine 130 participates in [4Fe-4S] cluster binding.

Belongs to the NifH/BchL/ChlL family. Homodimer. [4Fe-4S] cluster is required as a cofactor. Post-translationally, the reversible ADP-ribosylation of Arg-98 inactivates the nitrogenase reductase and regulates nitrogenase activity.

It catalyses the reaction N2 + 8 reduced [2Fe-2S]-[ferredoxin] + 16 ATP + 16 H2O = H2 + 8 oxidized [2Fe-2S]-[ferredoxin] + 2 NH4(+) + 16 ADP + 16 phosphate + 6 H(+). Functionally, the key enzymatic reactions in nitrogen fixation are catalyzed by the nitrogenase complex, which has 2 components: the iron protein and the molybdenum-iron protein. In Roseiflexus sp. (strain RS-1), this protein is Nitrogenase iron protein.